A 504-amino-acid chain; its full sequence is ATP synthase subunit alpha, chloroplastic (504 aa).

Glycine 170–threonine 177 is a binding site for ATP. A Phosphothreonine modification is found at threonine 257.

Belongs to the ATPase alpha/beta chains family. As to quaternary structure, F-type ATPases have 2 components, CF(1) - the catalytic core - and CF(0) - the membrane proton channel. CF(1) has five subunits: alpha(3), beta(3), gamma(1), delta(1), epsilon(1). CF(0) has four main subunits: a, b, b' and c.

It is found in the plastid. The protein resides in the chloroplast thylakoid membrane. The catalysed reaction is ATP + H2O + 4 H(+)(in) = ADP + phosphate + 5 H(+)(out). Its function is as follows. Produces ATP from ADP in the presence of a proton gradient across the membrane. The alpha chain is a regulatory subunit. The polypeptide is ATP synthase subunit alpha, chloroplastic (Nasturtium officinale (Watercress)).